The sequence spans 343 residues: Palmitoyltransferase ZDHHC4 (343 aa).

Residues 1 to 2 (MD) lie on the Lumenal side of the membrane. A helical membrane pass occupies residues 3 to 23 (FLVLFLFYLAFLLICVVLICI). Topologically, residues 24–67 (FTKSQRLKAVVLGGAQVCSRVIPQCLQRAVQTLLHQLFHTRHPT) are cytoplasmic. A helical transmembrane segment spans residues 68 to 88 (FIVLHLLLQGLVYAEYTCEVF). At 89–100 (GYCRELEFSLPY) the chain is on the lumenal side. Residues 101–121 (LLLPYVLLSVNLVFFTLTCAA) traverse the membrane as a helical segment. The Cytoplasmic portion of the chain corresponds to 122-193 (NPGTITKANE…NCIGAWNTRY (72 aa)). Positions 149–199 (SRCPTCDLRKPARSKHCRLCDRCVHRFDHHCVWVNNCIGAWNTRYFLIYLL) constitute a DHHC domain. The S-palmitoyl cysteine intermediate role is filled by Cys179. Residues 194-214 (FLIYLLTLTASAATIATVTAA) traverse the membrane as a helical segment. Over 215–255 (FLLRLVTVSDLYQETYLDDVGHFQAVDTVFLIQHLFLAFPR) the chain is Lumenal. The helical transmembrane segment at 256–276 (IVFLLGFVIVLSMLLAGYLCF) threads the bilayer. Residues 277 to 343 (ALYLAATNQT…ATPSYKKKEK (67 aa)) lie on the Cytoplasmic side of the membrane. Positions 340–343 (KKEK) match the Di-lysine motif motif.

The protein belongs to the DHHC palmitoyltransferase family. As to quaternary structure, interacts with CPT1A.

The protein localises to the endoplasmic reticulum membrane. The protein resides in the golgi apparatus membrane. It is found in the cell membrane. The catalysed reaction is L-cysteinyl-[protein] + hexadecanoyl-CoA = S-hexadecanoyl-L-cysteinyl-[protein] + CoA. Palmitoyltransferase that could catalyze the addition of palmitate onto protein substrates including the D(2) dopamine receptor DRD2, GSK3B or MAVS. Mediates GSK3B palmitoylation to prevent its AKT1-mediated phosphorylation leading to activation of the STAT3 signaling pathway. Also catalyzes MAVS palmitoylation which promotes its stabilization and activation by inhibiting 'Lys-48'- but facilitating 'Lys-63'-linked ubiquitination. In Mus musculus (Mouse), this protein is Palmitoyltransferase ZDHHC4.